A 251-amino-acid chain; its full sequence is Large ribosomal subunit protein uL3 (251 aa).

Disordered regions lie at residues 140-162 and 229-251; these read SHRSIGSTGGRQDPGKTFKNKKM and AAPAGAVQAAQAAPEAPAAEENA. N5-methylglutamine is present on Gln-151.

Belongs to the universal ribosomal protein uL3 family. In terms of assembly, part of the 50S ribosomal subunit. Forms a cluster with proteins L14 and L19. Methylated by PrmB.

Its function is as follows. One of the primary rRNA binding proteins, it binds directly near the 3'-end of the 23S rRNA, where it nucleates assembly of the 50S subunit. This Methylobacterium nodulans (strain LMG 21967 / CNCM I-2342 / ORS 2060) protein is Large ribosomal subunit protein uL3.